The sequence spans 90 residues: DNA-directed RNA polymerase subunit omega (90 aa).

The disordered stretch occupies residues 69–90 (RQEQQEQDAAELAAVSSITHNR).

The protein belongs to the RNA polymerase subunit omega family. The RNAP catalytic core consists of 2 alpha, 1 beta, 1 beta' and 1 omega subunit. When a sigma factor is associated with the core the holoenzyme is formed, which can initiate transcription.

It catalyses the reaction RNA(n) + a ribonucleoside 5'-triphosphate = RNA(n+1) + diphosphate. In terms of biological role, promotes RNA polymerase assembly. Latches the N- and C-terminal regions of the beta' subunit thereby facilitating its interaction with the beta and alpha subunits. This chain is DNA-directed RNA polymerase subunit omega, found in Aliivibrio salmonicida (strain LFI1238) (Vibrio salmonicida (strain LFI1238)).